A 204-amino-acid polypeptide reads, in one-letter code: Imidazoleglycerol-phosphate dehydratase (204 aa).

Belongs to the imidazoleglycerol-phosphate dehydratase family.

The protein localises to the cytoplasm. The enzyme catalyses D-erythro-1-(imidazol-4-yl)glycerol 3-phosphate = 3-(imidazol-4-yl)-2-oxopropyl phosphate + H2O. It functions in the pathway amino-acid biosynthesis; L-histidine biosynthesis; L-histidine from 5-phospho-alpha-D-ribose 1-diphosphate: step 6/9. The polypeptide is Imidazoleglycerol-phosphate dehydratase (Corynebacterium jeikeium (strain K411)).